The following is a 331-amino-acid chain: MSPPAAIFEPTVAPTGIKGKVVVPETATIPGDSQTKLLDHFGGKWDNFKFAPIRESQVSRAMTRRYFQDLDRYAESDVVIVGAGSCGLSTAYVLAKARPDLKIAIIEASVSPGGGAWLGGQLFSAMVMRRPAELFLNELGVPYEEDPDMPNYVVVKHASLFTSTLLSKVLSFPNVKLFNATCVEDLVTRPGPNGNAQEVQIAGVVTNWTLVTLHHDDHSCMDPNTINAPVIISTTGHDGPFGAFSAKRLVSMTTIDKLGGMRGLDMNSAEDAIVKNTREVAKGLIIGGMELSEIDGFNRMGPTFGAMVLSGVKAAEEALRVFDDRKRECAE.

Substrate is bound by residues cysteine 86, 107–108, glycine 115, and valine 183; that span reads EA. Residue cysteine 220 is modified to 2,3-didehydroalanine (Cys). Residues aspartate 222, histidine 237, methionine 289, and 299–301 each bind substrate; that span reads RMG.

This sequence belongs to the THI4 family. Homooctamer. The cofactor is Fe cation. Post-translationally, during the catalytic reaction, a sulfide is transferred from Cys-220 to a reaction intermediate, generating a dehydroalanine residue.

The protein localises to the cytoplasm. The protein resides in the nucleus. The catalysed reaction is [ADP-thiazole synthase]-L-cysteine + glycine + NAD(+) = [ADP-thiazole synthase]-dehydroalanine + ADP-5-ethyl-4-methylthiazole-2-carboxylate + nicotinamide + 3 H2O + 2 H(+). In terms of biological role, involved in biosynthesis of the thiamine precursor thiazole. Catalyzes the conversion of NAD and glycine to adenosine diphosphate 5-(2-hydroxyethyl)-4-methylthiazole-2-carboxylic acid (ADT), an adenylated thiazole intermediate. The reaction includes an iron-dependent sulfide transfer from a conserved cysteine residue of the protein to a thiazole intermediate. The enzyme can only undergo a single turnover, which suggests it is a suicide enzyme. May have additional roles in adaptation to various stress conditions and in DNA damage tolerance. In Emericella nidulans (strain FGSC A4 / ATCC 38163 / CBS 112.46 / NRRL 194 / M139) (Aspergillus nidulans), this protein is Thiamine thiazole synthase.